The sequence spans 179 residues: Large ribosomal subunit protein uL5 (179 aa).

This sequence belongs to the universal ribosomal protein uL5 family. In terms of assembly, part of the 50S ribosomal subunit; part of the 5S rRNA/L5/L18/L25 subcomplex. Contacts the 5S rRNA and the P site tRNA. Forms a bridge to the 30S subunit in the 70S ribosome.

In terms of biological role, this is one of the proteins that bind and probably mediate the attachment of the 5S RNA into the large ribosomal subunit, where it forms part of the central protuberance. In the 70S ribosome it contacts protein S13 of the 30S subunit (bridge B1b), connecting the 2 subunits; this bridge is implicated in subunit movement. Contacts the P site tRNA; the 5S rRNA and some of its associated proteins might help stabilize positioning of ribosome-bound tRNAs. The protein is Large ribosomal subunit protein uL5 of Syntrophus aciditrophicus (strain SB).